The following is a 321-amino-acid chain: Glucokinase (321 aa).

Residue 8–13 (GDVGGT) participates in ATP binding.

It belongs to the bacterial glucokinase family.

The protein resides in the cytoplasm. It carries out the reaction D-glucose + ATP = D-glucose 6-phosphate + ADP + H(+). This Salmonella schwarzengrund (strain CVM19633) protein is Glucokinase.